The chain runs to 389 residues: Large envelope protein (389 aa).

Methionine 1 carries the N-acetylmethionine modification. A lipid anchor (N-myristoyl glycine; by host) is attached at glycine 2. The segment at 2-108 is pre-S1; that stretch reads GQNLSTSNPL…PPLRNTHPQA (107 aa). Positions 2-163 are pre-S; that stretch reads GQNLSTSNPL…FSRIGDPALN (162 aa). Over 2 to 170 the chain is Virion surface; in external conformation; sequence GQNLSTSNPL…ALNMENITSG (169 aa). The Intravirion; in internal conformation segment spans residues 2–242; the sequence is GQNLSTSNPL…PGYRWMCLRR (241 aa). The tract at residues 76-103 is disordered; sequence TLPANPPPASTNRQSGRQPTPLSPPLRN. The segment covering 85–95 has biased composition (polar residues); it reads STNRQSGRQPT. The tract at residues 109–163 is pre-S2; it reads MQWNSTTFHQTLQDPRVRGLYLPAGGSSSGTVNPVPTTVSPISSIFSRIGDPALN. A helical transmembrane segment spans residues 171–191; it reads FLGPLLVLQAGFFLLTKILTI. The Intravirion; in external conformation segment spans residues 192-242; it reads PKSLDSWWTSLNFLGGTTVCLGQNSQSPTSNHSPTSCPPTCPGYRWMCLRR. Residues 243-263 traverse the membrane as a helical segment; the sequence is FIIFLFILLLCLIFLLVLLDY. The Virion surface portion of the chain corresponds to 264–337; it reads QGMLPVCPLI…WASARFSWLS (74 aa). N-linked (GlcNAc...) asparagine; by host glycosylation is present at asparagine 309. Residues 338–358 traverse the membrane as a helical segment; it reads LLVPFVQWFVGLSPTVWLLVI. At 359 to 364 the chain is on the intravirion side; it reads WMMWYW. The helical transmembrane segment at 365–387 threads the bilayer; the sequence is GPKLFTILSPFLPLLPIFFCLWV. Topologically, residues 388-389 are virion surface; the sequence is YI.

This sequence belongs to the orthohepadnavirus major surface antigen family. In terms of assembly, in its internal form (Li-HBsAg), interacts with the capsid protein and with the isoform S. Interacts with host chaperone CANX. Associates with host chaperone CANX through its pre-S2 N glycan; this association may be essential for isoform M proper secretion. As to quaternary structure, interacts with isoform L. Interacts with the antigens of satellite virus HDV (HDVAgs); this interaction is required for encapsidation of HDV genomic RNA. Post-translationally, isoform M is N-terminally acetylated by host at a ratio of 90%, and N-glycosylated by host at the pre-S2 region. In terms of processing, myristoylated.

Its subcellular location is the virion membrane. Functionally, the large envelope protein exists in two topological conformations, one which is termed 'external' or Le-HBsAg and the other 'internal' or Li-HBsAg. In its external conformation the protein attaches the virus to cell receptors and thereby initiating infection. This interaction determines the species specificity and liver tropism. This attachment induces virion internalization predominantly through caveolin-mediated endocytosis. The large envelope protein also assures fusion between virion membrane and endosomal membrane. In its internal conformation the protein plays a role in virion morphogenesis and mediates the contact with the nucleocapsid like a matrix protein. In terms of biological role, the middle envelope protein plays an important role in the budding of the virion. It is involved in the induction of budding in a nucleocapsid independent way. In this process the majority of envelope proteins bud to form subviral lipoprotein particles of 22 nm of diameter that do not contain a nucleocapsid. This is Large envelope protein from Homo sapiens (Human).